A 973-amino-acid chain; its full sequence is ATP-dependent DNA helicase Q5 (973 aa).

One can recognise a Helicase ATP-binding domain in the interval 39 to 213; that stretch reads MAVVKGDKDV…FAALHLKQPV (175 aa). 52 to 59 lines the ATP pocket; it reads MPTGAGKS. The short motif at 157-160 is the DEAH box element; sequence DEAH. Residues 241-398 form the Helicase C-terminal domain; that stretch reads NLRDFCLKAL…NKPSDKATLL (158 aa). Positions 412, 428, 432, and 435 each coordinate Zn(2+). S489 and S492 each carry phosphoserine. Residues 491 to 621 are interaction with POLR2A; it reads GSGDEGRDEA…ASKDGQLYDM (131 aa). Disordered stretches follow at residues 518 to 538, 679 to 795, and 822 to 884; these read GKEA…LRDA, TEKL…VPGK, and CSLE…AREP. A Phosphothreonine modification is found at T527. The segment at 653–726 is interaction with RAD51; it reads PKRVGAGFSK…APGSRTNCGD (74 aa). S728 is subject to Phosphoserine; by CDK1. Positions 840–856 are enriched in basic and acidic residues; that stretch reads TQAEKRPRPQQESQEKR. The segment covering 863–878 has biased composition (polar residues); it reads PSTNSSALASDPSTEN.

Belongs to the helicase family. RecQ subfamily. As to quaternary structure, monomer. Interacts with TOP2A, TOP3A and TOP3B. Interacts with RNA polymerase II subunit POLR2A. Identified in a complex with the RNA polymerase II core bound to DNA. Interacts with RAD51. Interacts with WRN; this interaction stimulates WRN helicase activity on DNA fork duplexes. Interacts with MUS1; this interaction promotes MUS81-dependent mitotic DNA synthesis. Zn(2+) serves as cofactor. Phosphorylated by CDK1 at Ser-728; this phosphorylation is required for RECQL5-mediated disruption of RAD51 filaments on stalled replication forks.

Its subcellular location is the nucleus. The protein localises to the nucleoplasm. The enzyme catalyses Couples ATP hydrolysis with the unwinding of duplex DNA by translocating in the 3'-5' direction.. The catalysed reaction is ATP + H2O = ADP + phosphate + H(+). Its function is as follows. DNA helicase that plays an important role in DNA replication, transcription and repair. Binds to the RNA polymerase II subunit POLR2A during transcription elongation and suppresses transcription-associated genomic instability. Also associates with POLR1A and enforces the stability of ribosomal DNA arrays. Plays an important role in mitotic chromosome separation after cross-over events and cell cycle progress. Mechanistically, removes RAD51 filaments protecting stalled replication forks at common fragile sites and stimulates MUS81-EME1 endonuclease leading to mitotic DNA synthesis. Required for efficient DNA repair, including repair of inter-strand cross-links. Stimulates DNA decatenation mediated by TOP2A. Prevents sister chromatid exchange and homologous recombination. The chain is ATP-dependent DNA helicase Q5 (Recql5) from Rattus norvegicus (Rat).